A 577-amino-acid chain; its full sequence is CTP synthase (577 aa).

The segment at 1-268 (MDPAFIFITG…GALLCERLRL (268 aa)) is amidoligase domain. Residue S14 participates in CTP binding. S14 provides a ligand contact to UTP. Position 15 to 20 (15 to 20 (SLGKGI)) interacts with ATP. Y55 serves as a coordination point for L-glutamine. D72 contributes to the ATP binding site. Residues D72 and E142 each coordinate Mg(2+). Residues 149 to 151 (DIE), 189 to 194 (KTKPLQ), and K225 each bind CTP. Residues 189–194 (KTKPLQ) and K225 contribute to the UTP site. The region spanning 333 to 575 (TVALVGKYVS…VAAGLERKDS (243 aa)) is the Glutamine amidotransferase type-1 domain. Residue G396 coordinates L-glutamine. The active-site Nucleophile; for glutamine hydrolysis is C423. Residues 424–427 (LGMQ), E447, and R503 contribute to the L-glutamine site. Residues H548 and E550 contribute to the active site.

It belongs to the CTP synthase family. In terms of assembly, homotetramer.

The catalysed reaction is UTP + L-glutamine + ATP + H2O = CTP + L-glutamate + ADP + phosphate + 2 H(+). It catalyses the reaction L-glutamine + H2O = L-glutamate + NH4(+). The enzyme catalyses UTP + NH4(+) + ATP = CTP + ADP + phosphate + 2 H(+). Its pathway is pyrimidine metabolism; CTP biosynthesis via de novo pathway; CTP from UDP: step 2/2. Its activity is regulated as follows. Allosterically activated by GTP, when glutamine is the substrate; GTP has no effect on the reaction when ammonia is the substrate. The allosteric effector GTP functions by stabilizing the protein conformation that binds the tetrahedral intermediate(s) formed during glutamine hydrolysis. Inhibited by the product CTP, via allosteric rather than competitive inhibition. Its function is as follows. Catalyzes the ATP-dependent amination of UTP to CTP with either L-glutamine or ammonia as the source of nitrogen. Regulates intracellular CTP levels through interactions with the four ribonucleotide triphosphates. This Treponema pallidum (strain Nichols) protein is CTP synthase.